A 94-amino-acid chain; its full sequence is Citrate lyase acyl carrier protein (94 aa).

Position 14 is an O-(phosphoribosyl dephospho-coenzyme A)serine (serine 14).

This sequence belongs to the CitD family. As to quaternary structure, oligomer with a subunit composition of (alpha,beta,gamma)6.

The protein localises to the cytoplasm. Its function is as follows. Covalent carrier of the coenzyme of citrate lyase. This Fusobacterium nucleatum subsp. nucleatum (strain ATCC 25586 / DSM 15643 / BCRC 10681 / CIP 101130 / JCM 8532 / KCTC 2640 / LMG 13131 / VPI 4355) protein is Citrate lyase acyl carrier protein.